The chain runs to 619 residues: Tyrosine-protein kinase ZAP-70 (619 aa).

Positions 10-102 (FFYGSISRAE…GLPCNLRKPC (93 aa)) constitute an SH2 1 domain. Positions 103–162 (NRPSGLEPQPGVFDCLRDAMVRDYVRQTWKLEGEALEQAIISQAPQVEKLIATTAHERMP) are interdomain A. One can recognise an SH2 2 domain in the interval 163-254 (WYHSSLTREE…GLIYCLKEAC (92 aa)). Tyr248 bears the Phosphotyrosine mark. An interdomain B region spans residues 255–337 (PNSSASNASG…KKLFLKRDNL (83 aa)). Residues 260 to 309 (SNASGAAAPTLPAHPSTLTHPQRRIDTLNSDGYTPEPARITSPDKPRPMP) form a disordered region. The residue at position 289 (Ser289) is a Phosphoserine. Tyr292 bears the Phosphotyrosine mark. A Phosphotyrosine; by LCK modification is found at Tyr315. The residue at position 319 (Tyr319) is a Phosphotyrosine. One can recognise a Protein kinase domain in the interval 338 to 600 (LIADIELGCG…QRMRACYYSL (263 aa)). ATP contacts are provided by residues 345–352 (GCGNFGSV) and Lys369. Asp461 acts as the Proton acceptor in catalysis. Phosphotyrosine occurs at positions 492 and 493. A Glycyl lysine isopeptide (Lys-Gly) (interchain with G-Cter in ubiquitin) cross-link involves residue Lys544. Position 603 is an N6-acetyllysine (Lys603).

Belongs to the protein kinase superfamily. Tyr protein kinase family. SYK/ZAP-70 subfamily. As to quaternary structure, interacts with CD247/CD3Z; this interaction docks ZAP70 at the stimulated TCR. Interacts with NFAM1. Interacts with adapter protein SLA; this interaction negatively regulates T-cell receptor signaling. Interacts with FCRL3. Interacts with VAV1. Interacts with CBL; this interaction promotes ubiquitination, internalization and subsequent degradation of CD247/CD3Z. Identified in a complex with CBL and UBE2L3. Interacts with SHB. Interacts with adapter protein SLA2; this interaction negatively regulates T-cell receptor signaling. Interacts with CBLB. Interacts (via SH2 domains) with RHOH; this interaction regulates ZAP70 subcellular localization. Interacts with DEF6. Interacts (ubiquitinated form) with OTUD7B and UBASH3B. Post-translationally, phosphorylated on tyrosine residues upon T-cell antigen receptor (TCR) stimulation. Phosphorylation of Tyr-315 and Tyr-319 are essential for ZAP70 positive function on T-lymphocyte activation whereas Tyr-292 has a negative regulatory role. Within the C-terminal kinase domain, Tyr-492 and Tyr-493 are phosphorylated after TCR induction, Tyr-492 playing a negative regulatory role and Tyr-493 a positive. Tyr-493 is dephosphorylated by PTN22. In terms of processing, ubiquitinated in response to T cell activation. Deubiquitinated by OTUD7B. In terms of tissue distribution, expressed in T- and natural killer cells. Also present in early thymocytes and pro/pre B-cells.

Its subcellular location is the cytoplasm. The protein resides in the cell membrane. It catalyses the reaction L-tyrosyl-[protein] + ATP = O-phospho-L-tyrosyl-[protein] + ADP + H(+). Its activity is regulated as follows. Activated by phosphorylation at Tyr-493 in the activation loop. Inhibited by staurosporine. In terms of biological role, tyrosine kinase that plays an essential role in regulation of the adaptive immune response. Regulates motility, adhesion and cytokine expression of mature T-cells, as well as thymocyte development. Also contributes to the development and activation of primary B-lymphocytes. When antigen presenting cells (APC) activate T-cell receptor (TCR), a serie of phosphorylations lead to the recruitment of ZAP70 to the doubly phosphorylated TCR component CD247/CD3Z through ITAM motif at the plasma membrane. This recruitment serves to localization to the stimulated TCR and to relieve its autoinhibited conformation. Release of ZAP70 active conformation is further stabilized by phosphorylation mediated by LCK. Subsequently, ZAP70 phosphorylates at least 2 essential adapter proteins: LAT and LCP2. In turn, a large number of signaling molecules are recruited and ultimately lead to lymphokine production, T-cell proliferation and differentiation. Furthermore, ZAP70 controls cytoskeleton modifications, adhesion and mobility of T-lymphocytes, thus ensuring correct delivery of effectors to the APC. ZAP70 is also required for TCR-CD247/CD3Z internalization and degradation through interaction with the E3 ubiquitin-protein ligase CBL and adapter proteins SLA and SLA2. Thus, ZAP70 regulates both T-cell activation switch on and switch off by modulating TCR expression at the T-cell surface. During thymocyte development, ZAP70 promotes survival and cell-cycle progression of developing thymocytes before positive selection (when cells are still CD4/CD8 double negative). Additionally, ZAP70-dependent signaling pathway may also contribute to primary B-cells formation and activation through B-cell receptor (BCR). In Homo sapiens (Human), this protein is Tyrosine-protein kinase ZAP-70 (ZAP70).